Reading from the N-terminus, the 302-residue chain is Recombination-associated protein RdgC (302 aa).

This sequence belongs to the RdgC family.

It is found in the cytoplasm. The protein resides in the nucleoid. In terms of biological role, may be involved in recombination. The sequence is that of Recombination-associated protein RdgC from Mannheimia succiniciproducens (strain KCTC 0769BP / MBEL55E).